Reading from the N-terminus, the 675-residue chain is DNA gyrase subunit B (675 aa).

The Toprim domain occupies 453-567 (SELYVVEGDS…NGHIFLAQPP (115 aa)). Residues E459, D532, and D534 each contribute to the Mg(2+) site.

The protein belongs to the type II topoisomerase GyrB family. In terms of assembly, heterotetramer, composed of two GyrA and two GyrB chains. In the heterotetramer, GyrA contains the active site tyrosine that forms a transient covalent intermediate with DNA, while GyrB binds cofactors and catalyzes ATP hydrolysis. Requires Mg(2+) as cofactor. The cofactor is Mn(2+). Ca(2+) serves as cofactor.

It is found in the cytoplasm. It catalyses the reaction ATP-dependent breakage, passage and rejoining of double-stranded DNA.. Inhibited by 4-quinoline drugs (nalidixic acid, ciprofloxacin, ofloxacin), although it is much less sensitive than the corresponding enzyme from E.coli. GyrB intrinsic ATPase activity inhibited by aminopyrazinamide and pyrrolamide derivatives. Functionally, a type II topoisomerase that negatively supercoils closed circular double-stranded (ds) DNA in an ATP-dependent manner to modulate DNA topology and maintain chromosomes in an underwound state. Negative supercoiling favors strand separation, and DNA replication, transcription, recombination and repair, all of which involve strand separation. Also able to catalyze the interconversion of other topological isomers of dsDNA rings, including catenanes and knotted rings. Type II topoisomerases break and join 2 DNA strands simultaneously in an ATP-dependent manner. This chain is DNA gyrase subunit B, found in Mycolicibacterium smegmatis (strain ATCC 700084 / mc(2)155) (Mycobacterium smegmatis).